The following is a 447-amino-acid chain: Adenylosuccinate synthetase (447 aa).

GTP-binding positions include 35-41 and 63-65; these read GDEGKGK and GHT. The active-site Proton acceptor is Asp36. Mg(2+)-binding residues include Asp36 and Gly63. Residues 36 to 39, 61 to 64, Thr153, Arg167, Asn245, Thr260, and Arg324 each bind IMP; these read DEGK and NAGH. The Proton donor role is filled by His64. Position 320 to 326 (320 to 326) interacts with substrate; it reads VTTKRKR. GTP is bound by residues Arg326, 352–354, and 435–437; these read KLD and GVG.

Belongs to the adenylosuccinate synthetase family. Homodimer. The cofactor is Mg(2+).

Its subcellular location is the cytoplasm. It catalyses the reaction IMP + L-aspartate + GTP = N(6)-(1,2-dicarboxyethyl)-AMP + GDP + phosphate + 2 H(+). It functions in the pathway purine metabolism; AMP biosynthesis via de novo pathway; AMP from IMP: step 1/2. Its function is as follows. Plays an important role in the de novo pathway and in the salvage pathway of purine nucleotide biosynthesis. Catalyzes the first committed step in the biosynthesis of AMP from IMP. The sequence is that of Adenylosuccinate synthetase from Drosophila erecta (Fruit fly).